A 202-amino-acid polypeptide reads, in one-letter code: ATP-dependent Clp protease proteolytic subunit (202 aa).

Catalysis depends on Ser101, which acts as the Nucleophile. The active site involves His126.

The protein belongs to the peptidase S14 family. As to quaternary structure, component of the chloroplastic Clp protease core complex.

It is found in the plastid. It localises to the chloroplast stroma. It carries out the reaction Hydrolysis of proteins to small peptides in the presence of ATP and magnesium. alpha-casein is the usual test substrate. In the absence of ATP, only oligopeptides shorter than five residues are hydrolyzed (such as succinyl-Leu-Tyr-|-NHMec, and Leu-Tyr-Leu-|-Tyr-Trp, in which cleavage of the -Tyr-|-Leu- and -Tyr-|-Trp bonds also occurs).. In terms of biological role, cleaves peptides in various proteins in a process that requires ATP hydrolysis. Has a chymotrypsin-like activity. Plays a major role in the degradation of misfolded proteins. This Acorus calamus (Sweet flag) protein is ATP-dependent Clp protease proteolytic subunit.